Consider the following 702-residue polypeptide: Threonine--tRNA ligase (702 aa).

Residues 1–30 (MSAPVHPVPGADGGDPLRPATPGLRSPQVP) are disordered. Residues 15–84 (DPLRPATPGL…DVDVEVTPVP (70 aa)) enclose the TGS domain. The segment at 279–585 (DHRKLGIELD…LTEHYAGAFP (307 aa)) is catalytic. C384, H435, and H562 together coordinate Zn(2+).

It belongs to the class-II aminoacyl-tRNA synthetase family. In terms of assembly, homodimer. Zn(2+) serves as cofactor.

Its subcellular location is the cytoplasm. It carries out the reaction tRNA(Thr) + L-threonine + ATP = L-threonyl-tRNA(Thr) + AMP + diphosphate + H(+). Its function is as follows. Catalyzes the attachment of threonine to tRNA(Thr) in a two-step reaction: L-threonine is first activated by ATP to form Thr-AMP and then transferred to the acceptor end of tRNA(Thr). Also edits incorrectly charged L-seryl-tRNA(Thr). The sequence is that of Threonine--tRNA ligase from Mycobacterium leprae (strain Br4923).